Here is a 463-residue protein sequence, read N- to C-terminus: Phosphomannomutase/phosphoglucomutase (463 aa).

S108 (phosphoserine intermediate) is an active-site residue. S108, D242, D244, and D246 together coordinate Mg(2+). Positions 325, 327, and 329 each coordinate substrate.

The protein belongs to the phosphohexose mutase family. Monomer. It depends on Mg(2+) as a cofactor.

The enzyme catalyses alpha-D-mannose 1-phosphate = D-mannose 6-phosphate. The catalysed reaction is alpha-D-glucose 1-phosphate = alpha-D-glucose 6-phosphate. It participates in nucleotide-sugar biosynthesis; GDP-alpha-D-mannose biosynthesis; alpha-D-mannose 1-phosphate from D-fructose 6-phosphate: step 2/2. It functions in the pathway bacterial outer membrane biogenesis; lipopolysaccharide biosynthesis. The phosphomannomutase activity produces a precursor for alginate polymerization. The alginate layer causes a mucoid phenotype and provides a protective barrier against host immune defenses and antibiotics. Also involved in core-LPS biosynthesis due to its phosphoglucomutase activity. Essential for biofilm production. This chain is Phosphomannomutase/phosphoglucomutase (algC), found in Pseudomonas putida (strain ATCC 47054 / DSM 6125 / CFBP 8728 / NCIMB 11950 / KT2440).